Consider the following 429-residue polypeptide: MKRIKFGLATQIFVGLILGVIVGVIWYGNPALPTYLQPIGDLFLRLIKMIVIPIVVSSLIIGVAGAGNGKQVGKLGFRTILYFEIITTFAIILGLALANIFHPGTGVNIHEAQKSDISQYVETEKEQSNKSVAETFLHIVPTNFFQSLVEGDLLAIICFTVLFALGISAIGERGKPVLAFFEGVSHAMFHVVNLVMKVAPFGVFALIGVTVSKFGLGSLISLGKLVGLVYVALAFFLIVIFGIVAKIAGISIFKFLAYMKDEILLAFSTSSSETVLPRIMEKMEKIGCPKGIVSFVIPIGYTFNLDGSVLYQSIAALFLAQVYGIDLTIWHQITLVLVLMVTSKGMAAVPGTSFVVLLATLGTIGVPAEGLAFIAGVDRIMDMARTVVNLTGNALAAVVMSKWEGMFNPAKAETVMSQSKTEQNATISG.

The Cytoplasmic portion of the chain corresponds to 1–5 (MKRIK). The helical transmembrane segment at 6 to 26 (FGLATQIFVGLILGVIVGVIW) threads the bilayer. Topologically, residues 27 to 45 (YGNPALPTYLQPIGDLFLR) are extracellular. The helical transmembrane segment at 46–66 (LIKMIVIPIVVSSLIIGVAGA) threads the bilayer. Residues 67 to 79 (GNGKQVGKLGFRT) lie on the Cytoplasmic side of the membrane. The chain crosses the membrane as a helical span at residues 80–100 (ILYFEIITTFAIILGLALANI). Residues 101-150 (FHPGTGVNIHEAQKSDISQYVETEKEQSNKSVAETFLHIVPTNFFQSLVE) lie on the Extracellular side of the membrane. A helical transmembrane segment spans residues 151-171 (GDLLAIICFTVLFALGISAIG). Residues 172 to 190 (ERGKPVLAFFEGVSHAMFH) lie on the Cytoplasmic side of the membrane. The helical transmembrane segment at 191–211 (VVNLVMKVAPFGVFALIGVTV) threads the bilayer. At 212–224 (SKFGLGSLISLGK) the chain is on the extracellular side. The helical transmembrane segment at 225 to 245 (LVGLVYVALAFFLIVIFGIVA) threads the bilayer. Position 246 (lysine 246) is a topological domain, cytoplasmic. Residues 247–267 (IAGISIFKFLAYMKDEILLAF) form a helical membrane-spanning segment. Over 268-290 (STSSSETVLPRIMEKMEKIGCPK) the chain is Extracellular. Residues 291–311 (GIVSFVIPIGYTFNLDGSVLY) traverse the membrane as a helical segment. Topologically, residues 312–321 (QSIAALFLAQ) are cytoplasmic. The chain crosses the membrane as a helical span at residues 322 to 342 (VYGIDLTIWHQITLVLVLMVT). The Extracellular segment spans residues 343–353 (SKGMAAVPGTS). A helical membrane pass occupies residues 354–374 (FVVLLATLGTIGVPAEGLAFI). The Cytoplasmic segment spans residues 375 to 429 (AGVDRIMDMARTVVNLTGNALAAVVMSKWEGMFNPAKAETVMSQSKTEQNATISG).

The protein belongs to the dicarboxylate/amino acid:cation symporter (DAACS) (TC 2.A.23) family. As to quaternary structure, homotrimer. Interacts with FloT.

It localises to the cell membrane. It is found in the membrane raft. In terms of biological role, this carrier protein is part of the Na(+)-dependent, binding-protein-independent glutamate-aspartate transport system. This chain is Proton/sodium-glutamate symport protein (gltT), found in Bacillus subtilis (strain 168).